The sequence spans 674 residues: MELDFIHTICPYCGTGCGVDLVVKDGTLVGTNPFKRHPVNEGKTCIKGSYCHEFVHRDDRLKTPLIRKNGELVEASWDEALELISGKLQNYSPEEVGFFSSARCTNEDNYVFQKFARTVIKTNNVDHCARLUHSATVVGLGQAFGSGAMTNSISDIEDADCIFIIGSNTFEQHPLIARRVVRAKEKGTKIIVIDPRYTPTAKQADLYLQLLPGTNIAVLNAIMHVLVKENLVDEEFIKNRTKGYEELKTTLETYTPEYASKLSGVAPELIVEAAKMYGSANAASILYCMGITQFTTGVNNVKSCCNLAMITGNIGKPGTGVNPLRGQNNVQGACDMGALPNVFPGYQAVPANHEKYAEAWNTCVDPNVGLSIPDMLAKAGEQVKCIYVMGENPMVSDPDIHHVEHALKSLDLLIVQDIFLTETAQVADVVLPGASWAEKDGTFSNTERRIQKINKAVDSPGEAIADWKIVKMLAEKMGQGELFNFNTAEEVFQEIAKVTPQYAGVTYERLGVDGLHWPCKTCEDPGTPILHCEKCLTPDGLGNIFAIDYADPDEMADSEYPMTLTTGRIIFHYHTGTMTRRSKHMADEINEGFVEIHPEDAEKMGIKNKQKVKVSTRRGEVVVNAKITPNIKQGVVFMPFHFAETAANILTNPAQDPNCKIPEYKVCAAKVEKI.

Positions 3–59 constitute a 4Fe-4S Mo/W bis-MGD-type domain; that stretch reads LDFIHTICPYCGTGCGVDLVVKDGTLVGTNPFKRHPVNEGKTCIKGSYCHEFVHRDD. C10, C13, C17, and C45 together coordinate [4Fe-4S] cluster. Position 132 (U132) is a non-standard amino acid, selenocysteine.

Belongs to the prokaryotic molybdopterin-containing oxidoreductase family. In terms of assembly, dimer of an alpha (FdhA1) and a beta (FdhB1) subunit. It depends on [4Fe-4S] cluster as a cofactor. Mo-bis(molybdopterin guanine dinucleotide) is required as a cofactor. Zn(2+) serves as cofactor.

It carries out the reaction oxidized coenzyme F420-(gamma-L-Glu)(n) + formate + 2 H(+) = reduced coenzyme F420-(gamma-L-Glu)(n) + CO2. Catalyzes the oxidation of formate to carbon dioxide, with coenzyme F420 as the electron acceptor. In vitro can also use methyl viologen as electron acceptor. This chain is F420-dependent formate dehydrogenase 1 subunit alpha, found in Methanococcus maripaludis (strain DSM 14266 / JCM 13030 / NBRC 101832 / S2 / LL).